The following is a 228-amino-acid chain: uncharacterized protein (228 aa).

This is an uncharacterized protein from Acidianus ambivalens (Desulfurolobus ambivalens).